The primary structure comprises 153 residues: 3-hydroxyacyl-[acyl-carrier-protein] dehydratase FabZ (153 aa).

The active site involves H54.

It belongs to the thioester dehydratase family. FabZ subfamily.

Its subcellular location is the cytoplasm. The enzyme catalyses a (3R)-hydroxyacyl-[ACP] = a (2E)-enoyl-[ACP] + H2O. In terms of biological role, involved in unsaturated fatty acids biosynthesis. Catalyzes the dehydration of short chain beta-hydroxyacyl-ACPs and long chain saturated and unsaturated beta-hydroxyacyl-ACPs. This chain is 3-hydroxyacyl-[acyl-carrier-protein] dehydratase FabZ, found in Chlamydia trachomatis serovar L2 (strain ATCC VR-902B / DSM 19102 / 434/Bu).